Here is a 337-residue protein sequence, read N- to C-terminus: Holliday junction branch migration complex subunit RuvB (337 aa).

A large ATPase domain (RuvB-L) region spans residues 1–181; that stretch reads MQRLVEIERF…FGMNFRMQFY (181 aa). ATP-binding positions include leucine 20, arginine 21, glycine 62, lysine 65, threonine 66, threonine 67, 128–130, arginine 171, tyrosine 181, and arginine 218; that span reads EDF. Residue threonine 66 coordinates Mg(2+). Residues 182–252 are small ATPAse domain (RuvB-S); it reads SPEELSKIIS…RAQYALDELG (71 aa). The segment at 255-337 is head domain (RuvB-H); sequence SYGFDEMDIK…MPALDDGGLF (83 aa). DNA is bound by residues arginine 309 and arginine 314.

Belongs to the RuvB family. Homohexamer. Forms an RuvA(8)-RuvB(12)-Holliday junction (HJ) complex. HJ DNA is sandwiched between 2 RuvA tetramers; dsDNA enters through RuvA and exits via RuvB. An RuvB hexamer assembles on each DNA strand where it exits the tetramer. Each RuvB hexamer is contacted by two RuvA subunits (via domain III) on 2 adjacent RuvB subunits; this complex drives branch migration. In the full resolvosome a probable DNA-RuvA(4)-RuvB(12)-RuvC(2) complex forms which resolves the HJ.

The protein resides in the cytoplasm. The enzyme catalyses ATP + H2O = ADP + phosphate + H(+). The RuvA-RuvB-RuvC complex processes Holliday junction (HJ) DNA during genetic recombination and DNA repair, while the RuvA-RuvB complex plays an important role in the rescue of blocked DNA replication forks via replication fork reversal (RFR). RuvA specifically binds to HJ cruciform DNA, conferring on it an open structure. The RuvB hexamer acts as an ATP-dependent pump, pulling dsDNA into and through the RuvAB complex. RuvB forms 2 homohexamers on either side of HJ DNA bound by 1 or 2 RuvA tetramers; 4 subunits per hexamer contact DNA at a time. Coordinated motions by a converter formed by DNA-disengaged RuvB subunits stimulates ATP hydrolysis and nucleotide exchange. Immobilization of the converter enables RuvB to convert the ATP-contained energy into a lever motion, pulling 2 nucleotides of DNA out of the RuvA tetramer per ATP hydrolyzed, thus driving DNA branch migration. The RuvB motors rotate together with the DNA substrate, which together with the progressing nucleotide cycle form the mechanistic basis for DNA recombination by continuous HJ branch migration. Branch migration allows RuvC to scan DNA until it finds its consensus sequence, where it cleaves and resolves cruciform DNA. This Sulfurimonas denitrificans (strain ATCC 33889 / DSM 1251) (Thiomicrospira denitrificans (strain ATCC 33889 / DSM 1251)) protein is Holliday junction branch migration complex subunit RuvB.